The chain runs to 258 residues: Regulatory protein RecX (258 aa).

The protein belongs to the RecX family.

Its subcellular location is the cytoplasm. In terms of biological role, modulates RecA activity. In Streptococcus uberis (strain ATCC BAA-854 / 0140J), this protein is Regulatory protein RecX.